An 816-amino-acid polypeptide reads, in one-letter code: Phosphatidylinositol 4-kinase beta (816 aa).

3 disordered regions span residues 1–29 (MGDM…GGSL), 99–121 (EEED…RRRQ), and 250–318 (RKRE…SFSS). G2 is modified (N-acetylglycine). Residues 2 to 68 (GDMVVEPATL…VKLLHGGVAI (67 aa)) form an interaction with ACBD3 region. Residues 10–29 (TLKPTSEPTPSPSGNNGGSL) show a composition bias toward low complexity. One can recognise a PIK helical domain in the interval 61 to 242 (LLHGGVAISS…GTKLRKLILS (182 aa)). At S258 the chain carries Phosphoserine. A Phosphothreonine modification is found at T263. Residues S266, S275, S277, S284, and S294 each carry the phosphoserine modification. Polar residues-rich tracts occupy residues 278–297 (DATA…SNPK) and 306–318 (SSST…SFSS). Phosphoserine is present on S428. T438 carries the post-translational modification Phosphothreonine. S511 carries the phosphoserine modification. Residues T517 and T519 each carry the phosphothreonine modification. Positions 535-801 (EPWQEKVRRI…MVDGSMRSIT (267 aa)) constitute a PI3K/PI4K catalytic domain. Positions 541 to 547 (VRRIREG) are G-loop. Residues 668–676 (QVKDRHNGN) form a catalytic loop region. The tract at residues 687 to 711 (HIDFGFILSSSPRNLGFETSAFKLT) is activation loop.

Belongs to the PI3/PI4-kinase family. Type III PI4K subfamily. In terms of assembly, interacts with ARF1 and ARF3 in the Golgi complex, but not with ARF4, ARF5 or ARF6. Interacts with NCS1/FREQ in a calcium-independent manner. Interacts with CALN1/CABP8 and CALN2/CABP7; in a calcium-dependent manner; this interaction competes with NCS1/FREQ binding. Interacts with ACBD3. Interacts with ARMH3, YWHAB, YWHAE, YWHAG, YWHAH, YWHAQ, YWHAZ and SFN. Interacts with GGA2 (via VHS domain); the interaction is important for PI4KB location at the Golgi apparatus membrane. Interacts with ATG9A. The cofactor is Mg(2+). It depends on Mn(2+) as a cofactor. As to expression, strongly expressed in brain, kidney, lung, small intestine, uterus and adrenal gland. Weaker expression in liver, heart, skeletal muscle, thymus and testis. Not detected in spleen.

It is found in the golgi apparatus. The protein localises to the endomembrane system. It localises to the mitochondrion outer membrane. The protein resides in the rough endoplasmic reticulum membrane. Its subcellular location is the golgi apparatus membrane. The catalysed reaction is a 1,2-diacyl-sn-glycero-3-phospho-(1D-myo-inositol) + ATP = a 1,2-diacyl-sn-glycero-3-phospho-(1D-myo-inositol 4-phosphate) + ADP + H(+). Inhibited by wortmannin. Increased kinase activity upon interaction with NCS1/FREQ. Functionally, phosphorylates phosphatidylinositol (PI) in the first committed step in the production of the second messenger inositol-1,4,5,-trisphosphate (PIP). May regulate Golgi disintegration/reorganization during mitosis, possibly via its phosphorylation. Involved in Golgi-to-plasma membrane trafficking. May play an important role in the inner ear development. The chain is Phosphatidylinositol 4-kinase beta (Pi4kb) from Rattus norvegicus (Rat).